The following is a 158-amino-acid chain: Probable deoxyuridine 5'-triphosphate nucleotidohydrolase (158 aa).

The protein belongs to the dUTPase family. Mg(2+) serves as cofactor.

It carries out the reaction dUTP + H2O = dUMP + diphosphate + H(+). It participates in pyrimidine metabolism; dUMP biosynthesis; dUMP from dCTP (dUTP route): step 1/2. This enzyme is involved in nucleotide metabolism: it produces dUMP, the immediate precursor of thymidine nucleotides and it decreases the intracellular concentration of dUTP so that uracil cannot be incorporated into DNA. It does probably not deaminate dCTP. The chain is Probable deoxyuridine 5'-triphosphate nucleotidohydrolase from Sulfolobus islandicus rod-shaped virus 1 (SIRV-1).